The primary structure comprises 444 residues: C4-dicarboxylate transport protein 3 (444 aa).

9 helical membrane passes run 22 to 42, 60 to 80, 95 to 115, 162 to 182, 198 to 218, 236 to 256, 321 to 341, 346 to 366, and 399 to 419; these read VLYVQVLIAIVLGAIVGWLWP, LIKMVIAPIIFCTVVSGIAHI, VYFEVVSTFALVIGLIIGNLV, GEILQVLLFSVLFGFAIMSLG, AVFGVISIVMRAAPIGAFGAM, LIATFYVTAALFVFVVLGIIA, IYMTLATLFIAQALGFDLSFG, ILVVAMLTSKGASGITGAGFI, and LTNLCGNGVACVIVAWWEGEL.

Belongs to the dicarboxylate/amino acid:cation symporter (DAACS) (TC 2.A.23) family.

The protein resides in the cell inner membrane. Its function is as follows. Responsible for the transport of dicarboxylates such as succinate, fumarate, and malate from the periplasm across the membrane. The polypeptide is C4-dicarboxylate transport protein 3 (Bradyrhizobium diazoefficiens (strain JCM 10833 / BCRC 13528 / IAM 13628 / NBRC 14792 / USDA 110)).